A 247-amino-acid chain; its full sequence is Calpain small subunit 2 (247 aa).

Ca(2+) contacts are provided by Ala88, Asp91, Glu93, Asp131, Asp133, Thr135, Lys137, Glu142, Asp161, Asp163, Ser165, and Asp204. 4 consecutive EF-hand domains span residues 118-151, 148-183, 184-212, and 213-247; these read FSLD…NNIK, NNIK…AGFQ, LNEQ…ISCL, and VRLD…TMYS.

Heterodimer of a large (catalytic) and a small (regulatory) subunit.

It localises to the cytoplasm. Its subcellular location is the cell membrane. In terms of biological role, calcium-regulated non-lysosomal thiol-protease which catalyzes limited proteolysis of substrates involved in cytoskeletal remodeling and signal transduction. This small subunit may act as a tissue-specific chaperone of the large subunit, possibly by helping it fold into its correct conformation for activity. This Mus musculus (Mouse) protein is Calpain small subunit 2 (Capns2).